Consider the following 219-residue polypeptide: Orotate phosphoribosyltransferase (219 aa).

5-phospho-alpha-D-ribose 1-diphosphate is bound at residue Lys-26. 34–35 (FF) lines the orotate pocket. 5-phospho-alpha-D-ribose 1-diphosphate contacts are provided by residues 72 to 73 (YK), Arg-98, Lys-99, Lys-102, His-104, and 124 to 132 (DDVITAGTA). Positions 128 and 156 each coordinate orotate.

This sequence belongs to the purine/pyrimidine phosphoribosyltransferase family. PyrE subfamily. Homodimer. Mg(2+) is required as a cofactor.

It catalyses the reaction orotidine 5'-phosphate + diphosphate = orotate + 5-phospho-alpha-D-ribose 1-diphosphate. It participates in pyrimidine metabolism; UMP biosynthesis via de novo pathway; UMP from orotate: step 1/2. Functionally, catalyzes the transfer of a ribosyl phosphate group from 5-phosphoribose 1-diphosphate to orotate, leading to the formation of orotidine monophosphate (OMP). This is Orotate phosphoribosyltransferase from Xanthomonas axonopodis pv. citri (strain 306).